An 89-amino-acid polypeptide reads, in one-letter code: Large ribosomal subunit protein bL31B (89 aa).

It belongs to the bacterial ribosomal protein bL31 family. Type B subfamily. Part of the 50S ribosomal subunit.

This is Large ribosomal subunit protein bL31B from Aeromonas salmonicida (strain A449).